Consider the following 61-residue polypeptide: Metallothionein-1 (61 aa).

Met1 bears the N-acetylmethionine mark. The beta stretch occupies residues 1–29; that stretch reads MDPNCSCSTGGSCTCTSSCACKNCKCTSC. Positions 5, 7, 13, 15, 19, 21, 24, 26, 29, 33, 34, 36, 37, 41, 44, 48, 50, 57, 59, and 60 each coordinate a divalent metal cation. The alpha stretch occupies residues 30 to 61; the sequence is KKSCCSCCPVGCSKCAQGCVCKGAADKCTCCA.

The protein belongs to the metallothionein superfamily. Type 1 family.

Functionally, metallothioneins have a high content of cysteine residues that bind various heavy metals; these proteins are transcriptionally regulated by both heavy metals and glucocorticoids. The sequence is that of Metallothionein-1 (Mt1) from Mus musculus (Mouse).